The following is a 101-amino-acid chain: Urease subunit beta (101 aa).

It belongs to the urease beta subunit family. Heterotrimer of UreA (gamma), UreB (beta) and UreC (alpha) subunits. Three heterotrimers associate to form the active enzyme.

Its subcellular location is the cytoplasm. The enzyme catalyses urea + 2 H2O + H(+) = hydrogencarbonate + 2 NH4(+). The protein operates within nitrogen metabolism; urea degradation; CO(2) and NH(3) from urea (urease route): step 1/1. In Sinorhizobium fredii (strain NBRC 101917 / NGR234), this protein is Urease subunit beta.